The following is a 148-amino-acid chain: ATP synthase epsilon chain (148 aa).

It belongs to the ATPase epsilon chain family. In terms of assembly, F-type ATPases have 2 components, CF(1) - the catalytic core - and CF(0) - the membrane proton channel. CF(1) has five subunits: alpha(3), beta(3), gamma(1), delta(1), epsilon(1). CF(0) has three main subunits: a, b and c.

It localises to the cell inner membrane. Its function is as follows. Produces ATP from ADP in the presence of a proton gradient across the membrane. This Paracoccus denitrificans (strain Pd 1222) protein is ATP synthase epsilon chain.